A 256-amino-acid chain; its full sequence is Imidazole glycerol phosphate synthase subunit HisF (256 aa).

Active-site residues include D11 and D130.

It belongs to the HisA/HisF family. As to quaternary structure, heterodimer of HisH and HisF.

The protein localises to the cytoplasm. The enzyme catalyses 5-[(5-phospho-1-deoxy-D-ribulos-1-ylimino)methylamino]-1-(5-phospho-beta-D-ribosyl)imidazole-4-carboxamide + L-glutamine = D-erythro-1-(imidazol-4-yl)glycerol 3-phosphate + 5-amino-1-(5-phospho-beta-D-ribosyl)imidazole-4-carboxamide + L-glutamate + H(+). It participates in amino-acid biosynthesis; L-histidine biosynthesis; L-histidine from 5-phospho-alpha-D-ribose 1-diphosphate: step 5/9. Functionally, IGPS catalyzes the conversion of PRFAR and glutamine to IGP, AICAR and glutamate. The HisF subunit catalyzes the cyclization activity that produces IGP and AICAR from PRFAR using the ammonia provided by the HisH subunit. In Psychrobacter sp. (strain PRwf-1), this protein is Imidazole glycerol phosphate synthase subunit HisF.